The sequence spans 98 residues: Large ribosomal subunit protein uL23 (98 aa).

This sequence belongs to the universal ribosomal protein uL23 family. Part of the 50S ribosomal subunit. Contacts protein L29, and trigger factor when it is bound to the ribosome.

In terms of biological role, one of the early assembly proteins it binds 23S rRNA. One of the proteins that surrounds the polypeptide exit tunnel on the outside of the ribosome. Forms the main docking site for trigger factor binding to the ribosome. The sequence is that of Large ribosomal subunit protein uL23 from Hydrogenovibrio crunogenus (strain DSM 25203 / XCL-2) (Thiomicrospira crunogena).